Reading from the N-terminus, the 226-residue chain is UPF0111 protein HI_1603 (226 aa).

The protein belongs to the UPF0111 family.

The polypeptide is UPF0111 protein HI_1603 (Haemophilus influenzae (strain ATCC 51907 / DSM 11121 / KW20 / Rd)).